A 123-amino-acid polypeptide reads, in one-letter code: uncharacterized protein (123 aa).

An N-terminal signal peptide occupies residues 1–20 (MARTLALRASAGLVAGMAMA).

This is an uncharacterized protein from Mycobacterium bovis (strain ATCC BAA-935 / AF2122/97).